A 312-amino-acid chain; its full sequence is Protein-glutamate methylesterase/protein-glutamine glutaminase (312 aa).

In terms of domain architecture, Response regulatory spans 5-122 (RVLSVDDSAL…REGMLAYSEM (118 aa)). A 4-aspartylphosphate modification is found at Asp-56. Residues 152–307 (LLSSEKLIAI…QQMLAKISAG (156 aa)) form the CheB-type methylesterase domain. Active-site residues include Ser-164, His-190, and Asp-249.

This sequence belongs to the CheB family. Post-translationally, phosphorylated by CheA. Phosphorylation of the N-terminal regulatory domain activates the methylesterase activity.

Its subcellular location is the cytoplasm. It carries out the reaction [protein]-L-glutamate 5-O-methyl ester + H2O = L-glutamyl-[protein] + methanol + H(+). It catalyses the reaction L-glutaminyl-[protein] + H2O = L-glutamyl-[protein] + NH4(+). Its function is as follows. Involved in chemotaxis. Part of a chemotaxis signal transduction system that modulates chemotaxis in response to various stimuli. Catalyzes the demethylation of specific methylglutamate residues introduced into the chemoreceptors (methyl-accepting chemotaxis proteins or MCP) by CheR. Also mediates the irreversible deamidation of specific glutamine residues to glutamic acid. The chain is Protein-glutamate methylesterase/protein-glutamine glutaminase from Shigella boydii serotype 4 (strain Sb227).